The chain runs to 133 residues: DNA-directed RNA polymerase subunit omega (133 aa).

It belongs to the RNA polymerase subunit omega family. As to quaternary structure, the RNAP catalytic core consists of 2 alpha, 1 beta, 1 beta' and 1 omega subunit. When a sigma factor is associated with the core the holoenzyme is formed, which can initiate transcription.

It catalyses the reaction RNA(n) + a ribonucleoside 5'-triphosphate = RNA(n+1) + diphosphate. In terms of biological role, promotes RNA polymerase assembly. Latches the N- and C-terminal regions of the beta' subunit thereby facilitating its interaction with the beta and alpha subunits. The protein is DNA-directed RNA polymerase subunit omega of Brucella canis (strain ATCC 23365 / NCTC 10854 / RM-666).